A 116-amino-acid chain; its full sequence is SPbeta prophage-derived uncharacterized protein YomQ (116 aa).

The polypeptide is SPbeta prophage-derived uncharacterized protein YomQ (yomQ) (Bacillus subtilis (strain 168)).